The chain runs to 1157 residues: DNA-directed RNA polymerase subunit beta (1157 aa).

This sequence belongs to the RNA polymerase beta chain family. As to quaternary structure, the RNAP catalytic core consists of 2 alpha, 1 beta, 1 beta' and 1 omega subunit. When a sigma factor is associated with the core the holoenzyme is formed, which can initiate transcription.

It catalyses the reaction RNA(n) + a ribonucleoside 5'-triphosphate = RNA(n+1) + diphosphate. DNA-dependent RNA polymerase catalyzes the transcription of DNA into RNA using the four ribonucleoside triphosphates as substrates. In Tropheryma whipplei (strain TW08/27) (Whipple's bacillus), this protein is DNA-directed RNA polymerase subunit beta.